A 149-amino-acid polypeptide reads, in one-letter code: MKTARRRAREFAVQGIYEWELNPDRPASLIEKHLRENEYFAKADEALFRSILYGVLKDVELLSAQVGRYYERAEDEVSPVERAVLLMAALELTQSPETPYPVIINEAIEITKTFGGTDGHKFVNGVLDKLAAEVRGDEVLAQKQRRKQD.

It belongs to the NusB family.

Its function is as follows. Involved in transcription antitermination. Required for transcription of ribosomal RNA (rRNA) genes. Binds specifically to the boxA antiterminator sequence of the ribosomal RNA (rrn) operons. This is Transcription antitermination protein NusB from Chromobacterium violaceum (strain ATCC 12472 / DSM 30191 / JCM 1249 / CCUG 213 / NBRC 12614 / NCIMB 9131 / NCTC 9757 / MK).